The sequence spans 193 residues: ATP synthase subunit b 1 (193 aa).

A disordered region spans residues 13-32; the sequence is PAVTGGDTHSGTGVPAEAHG. Residues 40 to 60 form a helical membrane-spanning segment; it reads ATFPSQLLWLAITFGLFYLFL.

This sequence belongs to the ATPase B chain family. F-type ATPases have 2 components, F(1) - the catalytic core - and F(0) - the membrane proton channel. F(1) has five subunits: alpha(3), beta(3), gamma(1), delta(1), epsilon(1). F(0) has three main subunits: a(1), b(2) and c(10-14). The alpha and beta chains form an alternating ring which encloses part of the gamma chain. F(1) is attached to F(0) by a central stalk formed by the gamma and epsilon chains, while a peripheral stalk is formed by the delta and b chains.

The protein resides in the cell inner membrane. F(1)F(0) ATP synthase produces ATP from ADP in the presence of a proton or sodium gradient. F-type ATPases consist of two structural domains, F(1) containing the extramembraneous catalytic core and F(0) containing the membrane proton channel, linked together by a central stalk and a peripheral stalk. During catalysis, ATP synthesis in the catalytic domain of F(1) is coupled via a rotary mechanism of the central stalk subunits to proton translocation. In terms of biological role, component of the F(0) channel, it forms part of the peripheral stalk, linking F(1) to F(0). This chain is ATP synthase subunit b 1, found in Mesorhizobium japonicum (strain LMG 29417 / CECT 9101 / MAFF 303099) (Mesorhizobium loti (strain MAFF 303099)).